Reading from the N-terminus, the 91-residue chain is uncharacterized protein (91 aa).

A run of 2 helical transmembrane segments spans residues 10 to 30 and 46 to 66; these read VLFTAPGLIVGALAIGAAGGI and LLVAVLFVGAFTGIMVEQALS. The interval 68 to 91 is disordered; that stretch reads MRRQDGARGTARAGRNSARRRMPS.

Its subcellular location is the cell membrane. This is an uncharacterized protein from Sinorhizobium fredii (strain NBRC 101917 / NGR234).